The chain runs to 409 residues: Aspartic protease pepA (409 aa).

An N-terminal signal peptide occupies residues 1–19 (MPSIVSLTAALTFVGAVIA). Residues 20-65 (SPVEKRSAFSVEQVPHTTYLKNGPAQKVKTLRKYGKPVPQSLLDAA) constitute a propeptide, activation peptide. Residues 97-404 (YLSPVTVGST…PDSPPRIGLA (308 aa)) form the Peptidase A1 domain. Catalysis depends on residues Asp-113 and Asp-293. Cys-329 and Cys-364 are joined by a disulfide. Residue Asn-335 is glycosylated (N-linked (GlcNAc...) asparagine).

This sequence belongs to the peptidase A1 family. Monomer.

The protein resides in the secreted. In terms of biological role, secreted aspartic endopeptidase that allows assimilation of proteinaceous substrates. The scissile peptide bond is attacked by a nucleophilic water molecule activated by two aspartic residues in the active site. Shows a broad primary substrate specificity. Favors hydrophobic residues at the P1 and P1' positions. This chain is Aspartic protease pepA, found in Leptosphaeria maculans (strain JN3 / isolate v23.1.3 / race Av1-4-5-6-7-8) (Blackleg fungus).